The following is a 165-amino-acid chain: Phosphopantetheine adenylyltransferase (165 aa).

Residue Ser9 participates in substrate binding. Residues 9 to 10 and His17 each bind ATP; that span reads SF. Residues Lys41, Ile75, and Arg89 each contribute to the substrate site. ATP contacts are provided by residues 90-92, Glu100, and 125-131; these read GVR and YLFVRSD.

The protein belongs to the bacterial CoaD family. Homohexamer. Mg(2+) serves as cofactor.

Its subcellular location is the cytoplasm. It carries out the reaction (R)-4'-phosphopantetheine + ATP + H(+) = 3'-dephospho-CoA + diphosphate. The protein operates within cofactor biosynthesis; coenzyme A biosynthesis; CoA from (R)-pantothenate: step 4/5. In terms of biological role, reversibly transfers an adenylyl group from ATP to 4'-phosphopantetheine, yielding dephospho-CoA (dPCoA) and pyrophosphate. The polypeptide is Phosphopantetheine adenylyltransferase (Borrelia hermsii (strain HS1 / DAH)).